The chain runs to 408 residues: MVPPPLPSRGGAAKRQLGKSLGPLLLLLALGHTWTYREEPEDRDREVCSENKITTTKYPCLKSSGELTTCFRKKCCKGYKFVLGQCIPEDYDICAQAPCEQQCTDNFGRVLCTCYPGYRYDRERHQKRERPYCLDIDECATSNTTLCAHICINTMGSYHCECREGYILEDDGRTCTRGDKYPNDTGHEEKSENEVKAGTCCATCKEFSQMKQTVLQLKQKMALLPNNAAELGKYVNGDKVLASNAYLPGPPGLPGGQGPPGSPGPKGSPGFPGMPGPPGQPGPRGSMGPMGPSPDLSHIKQGRRGPVGPPGAPGRHGSKGERGAPGPPGSPGPPGSFDFLLLVLADIRNDIAELQEKVFGHRTHSSAEDFPLPQEFSSYPETLDFGSGDDYSRRTEARDPEAPRNFYP.

An N-terminal signal peptide occupies residues 1 to 35; the sequence is MVPPPLPSRGGAAKRQLGKSLGPLLLLLALGHTWT. The EGF-like; calcium-binding domain maps to 135-176; that stretch reads DIDECATSNTTLCAHICINTMGSYHCECREGYILEDDGRTCT. Disulfide bonds link C139/C151, C147/C160, and C162/C175. N-linked (GlcNAc...) asparagine glycosylation is present at N143. N-linked (GlcNAc...) asparagine glycosylation occurs at N183. Disordered stretches follow at residues 246 to 335 and 361 to 408; these read YLPG…GPPG and HRTH…NFYP. 2 Collagen-like domains span residues 247–292 and 302–335; these read LPGP…PMGP and GRRG…GPPG. A compositionally biased stretch (pro residues) spans 272–281; that stretch reads PGMPGPPGQP. The span at 283 to 294 shows a compositional bias: low complexity; that stretch reads PRGSMGPMGPSP. Pro residues predominate over residues 325 to 334; the sequence is PGPPGSPGPP. S387 carries O-linked (Xyl...) (chondroitin sulfate) serine glycosylation. The segment covering 390 to 402 has biased composition (basic and acidic residues); the sequence is DYSRRTEARDPEA.

This sequence belongs to the CCBE1 family.

It is found in the secreted. Functionally, required for lymphangioblast budding and angiogenic sprouting from venous endothelium during embryogenesis. The polypeptide is Collagen and calcium-binding EGF domain-containing protein 1 (Ccbe1) (Mus musculus (Mouse)).